We begin with the raw amino-acid sequence, 307 residues long: GTPase Era (307 aa).

The Era-type G domain occupies 17 to 186; sequence RCGFVAIVGR…LELLKPYLPE (170 aa). The G1 stretch occupies residues 25 to 32; sequence GRPNVGKS. 25-32 contributes to the GTP binding site; that stretch reads GRPNVGKS. Residues 51 to 55 are G2; that stretch reads QTTRN. The tract at residues 72 to 75 is G3; that stretch reads DTPG. GTP is bound by residues 72 to 76 and 133 to 136; these read DTPGF and NKID. Residues 133 to 136 are G4; it reads NKID. The interval 165–167 is G5; sequence VSA. The KH type-2 domain maps to 217–293; it reads LGEELPYAMN…FLKVWVKVKS (77 aa).

Belongs to the TRAFAC class TrmE-Era-EngA-EngB-Septin-like GTPase superfamily. Era GTPase family. As to quaternary structure, monomer.

It is found in the cytoplasm. The protein localises to the cell inner membrane. Its function is as follows. An essential GTPase that binds both GDP and GTP, with rapid nucleotide exchange. Plays a role in 16S rRNA processing and 30S ribosomal subunit biogenesis and possibly also in cell cycle regulation and energy metabolism. This chain is GTPase Era, found in Neisseria meningitidis serogroup C / serotype 2a (strain ATCC 700532 / DSM 15464 / FAM18).